The sequence spans 282 residues: E3 ubiquitin-protein ligase RNF217 (282 aa).

Residues 1-218 (MSCRVCLEDR…LSIFGCKYRY (218 aa)) are TRIAD supradomain. Residues cysteine 3, cysteine 6, cysteine 23, cysteine 26, cysteine 123, cysteine 126, histidine 131, cysteine 136, cysteine 163, and cysteine 166 each coordinate Zn(2+). The RING-type 1 zinc finger occupies 3–49 (CRVCLEDRSIKPLPCCKKPVCDECLKRYLSSQVQLGQAEIQCPITEC). Residues 68–136 (IKYKYFLELS…HAPWHEGVNC (69 aa)) form an IBR-type zinc finger. The RING-type 2; atypical zinc-finger motif lies at 163–192 (CPRCKVHIQRTEGCDHMTCSQCNTNFCYRC). Cysteine 176 is an active-site residue. Residues cysteine 181, cysteine 184, cysteine 189, cysteine 192, histidine 205, and cysteine 214 each coordinate Zn(2+). The helical transmembrane segment at 243-263 (LLIVLGLVLGALAVVIGLFGL) threads the bilayer.

Belongs to the RBR family. RNF217 subfamily.

Its subcellular location is the cytoplasm. It localises to the membrane. The enzyme catalyses [E2 ubiquitin-conjugating enzyme]-S-ubiquitinyl-L-cysteine + [acceptor protein]-L-lysine = [E2 ubiquitin-conjugating enzyme]-L-cysteine + [acceptor protein]-N(6)-ubiquitinyl-L-lysine.. The protein operates within protein modification; protein ubiquitination. E3 ubiquitin-protein ligase which accepts ubiquitin from E2 ubiquitin-conjugating enzymes in the form of a thioester and then directly transfers the ubiquitin to targeted substrates. Mediates the degradation of the iron exporter ferroportin/SLC40A1 and thus regulates iron homeostasis. In Xenopus laevis (African clawed frog), this protein is E3 ubiquitin-protein ligase RNF217 (rnf217).